A 139-amino-acid chain; its full sequence is Putative general secretion pathway protein B (139 aa).

A helical membrane pass occupies residues 28–48; sequence IIYVICLLLICLWFAGMVLVG. Residues 93–139 form a disordered region; that stretch reads VEEEDDPGVAVENAPSSSEDEENTVEESEEKAGLRERVKNALNELER. Over residues 110–121 the composition is skewed to acidic residues; it reads SEDEENTVEESE. The segment covering 122-139 has biased composition (basic and acidic residues); the sequence is EKAGLRERVKNALNELER.

It is found in the cell membrane. Its function is as follows. Part of a cryptic operon that encodes proteins involved in type II secretion pathway in other organisms, but is not expressed in strain K12 under standard laboratory conditions. May play a regulatory role under conditions of derepressed gsp gene expression. The chain is Putative general secretion pathway protein B from Escherichia coli (strain K12).